The sequence spans 386 residues: 1-deoxy-D-xylulose 5-phosphate reductoisomerase (386 aa).

7 residues coordinate NADPH: threonine 10, glycine 11, serine 12, isoleucine 13, glycine 36, asparagine 38, and asparagine 122. Lysine 123 serves as a coordination point for 1-deoxy-D-xylulose 5-phosphate. NADPH is bound at residue glutamate 124. Mn(2+) is bound at residue aspartate 148. Serine 149, glutamate 150, serine 174, and histidine 197 together coordinate 1-deoxy-D-xylulose 5-phosphate. Glutamate 150 provides a ligand contact to Mn(2+). An NADPH-binding site is contributed by glycine 203. 1-deoxy-D-xylulose 5-phosphate contacts are provided by serine 210, asparagine 215, lysine 216, and glutamate 219. A Mn(2+)-binding site is contributed by glutamate 219.

This sequence belongs to the DXR family. Mg(2+) serves as cofactor. Mn(2+) is required as a cofactor.

It carries out the reaction 2-C-methyl-D-erythritol 4-phosphate + NADP(+) = 1-deoxy-D-xylulose 5-phosphate + NADPH + H(+). The protein operates within isoprenoid biosynthesis; isopentenyl diphosphate biosynthesis via DXP pathway; isopentenyl diphosphate from 1-deoxy-D-xylulose 5-phosphate: step 1/6. Functionally, catalyzes the NADPH-dependent rearrangement and reduction of 1-deoxy-D-xylulose-5-phosphate (DXP) to 2-C-methyl-D-erythritol 4-phosphate (MEP). This is 1-deoxy-D-xylulose 5-phosphate reductoisomerase from Geobacter sulfurreducens (strain ATCC 51573 / DSM 12127 / PCA).